A 394-amino-acid chain; its full sequence is Flap endonuclease 1 (394 aa).

Residues 1–104 form an N-domain region; it reads MGIKQLFSVI…GELAKRFQRK (104 aa). Position 34 (Asp-34) interacts with Mg(2+). Arg-47 and Arg-70 together coordinate DNA. Mg(2+) is bound by residues Asp-86, Glu-158, Glu-160, Asp-179, and Asp-181. The I-domain stretch occupies residues 122 to 253; sequence DVEKFSRRTV…STALKLIREH (132 aa). Glu-158 contacts DNA. The DNA site is built by Gly-231 and Asp-233. Asp-233 lines the Mg(2+) pocket. Positions 341 to 349 are interaction with PCNA; the sequence is QQARIEGFF. Over residues 356–383 the composition is skewed to basic and acidic residues; the sequence is EEEKKAHKRKLEEQAEQKRKKVKEEKKE. Residues 356-394 form a disordered region; that stretch reads EEEKKAHKRKLEEQAEQKRKKVKEEKKEKAKLKAKPRGA. Positions 384–394 are enriched in basic residues; that stretch reads KAKLKAKPRGA.

Belongs to the XPG/RAD2 endonuclease family. FEN1 subfamily. As to quaternary structure, interacts with PCNA. Three molecules of dnr-8/fen1 bind to one PCNA trimer with each molecule binding to one PCNA monomer. PCNA stimulates the nuclease activity without altering cleavage specificity. Mg(2+) is required as a cofactor. Phosphorylated. Phosphorylation upon DNA damage induces relocalization to the nuclear plasma.

The protein resides in the nucleus. Its subcellular location is the nucleolus. It is found in the nucleoplasm. The protein localises to the mitochondrion. Its function is as follows. Structure-specific nuclease with 5'-flap endonuclease and 5'-3' exonuclease activities involved in DNA replication and repair. During DNA replication, cleaves the 5'-overhanging flap structure that is generated by displacement synthesis when DNA polymerase encounters the 5'-end of a downstream Okazaki fragment. It enters the flap from the 5'-end and then tracks to cleave the flap base, leaving a nick for ligation. Also involved in the long patch base excision repair (LP-BER) pathway, by cleaving within the apurinic/apyrimidinic (AP) site-terminated flap. Acts as a genome stabilization factor that prevents flaps from equilibrating into structures that lead to duplications and deletions. Also possesses 5'-3' exonuclease activity on nicked or gapped double-stranded DNA, and exhibits RNase H activity. Also involved in replication and repair of rDNA and in repairing mitochondrial DNA. The chain is Flap endonuclease 1 (dnr-8) from Neurospora crassa (strain ATCC 24698 / 74-OR23-1A / CBS 708.71 / DSM 1257 / FGSC 987).